The primary structure comprises 196 residues: Thymidine kinase (196 aa).

ATP is bound by residues 9–16 (SAMNAGKS) and 87–90 (DECQ). The active-site Proton acceptor is the E88. 4 residues coordinate Zn(2+): C145, C147, C182, and H185.

The protein belongs to the thymidine kinase family. In terms of assembly, homotetramer.

The protein localises to the cytoplasm. It catalyses the reaction thymidine + ATP = dTMP + ADP + H(+). The protein is Thymidine kinase of Yersinia pestis.